The primary structure comprises 355 residues: UDP-N-acetylglucosamine--N-acetylmuramyl-(pentapeptide) pyrophosphoryl-undecaprenol N-acetylglucosamine transferase (355 aa).

Residues threonine 14–glycine 16, asparagine 126, arginine 162, serine 190, isoleucine 243, alanine 262–glutamate 267, and glutamine 287 each bind UDP-N-acetyl-alpha-D-glucosamine.

It belongs to the glycosyltransferase 28 family. MurG subfamily.

It localises to the cell inner membrane. The enzyme catalyses di-trans,octa-cis-undecaprenyl diphospho-N-acetyl-alpha-D-muramoyl-L-alanyl-D-glutamyl-meso-2,6-diaminopimeloyl-D-alanyl-D-alanine + UDP-N-acetyl-alpha-D-glucosamine = di-trans,octa-cis-undecaprenyl diphospho-[N-acetyl-alpha-D-glucosaminyl-(1-&gt;4)]-N-acetyl-alpha-D-muramoyl-L-alanyl-D-glutamyl-meso-2,6-diaminopimeloyl-D-alanyl-D-alanine + UDP + H(+). Its pathway is cell wall biogenesis; peptidoglycan biosynthesis. Functionally, cell wall formation. Catalyzes the transfer of a GlcNAc subunit on undecaprenyl-pyrophosphoryl-MurNAc-pentapeptide (lipid intermediate I) to form undecaprenyl-pyrophosphoryl-MurNAc-(pentapeptide)GlcNAc (lipid intermediate II). This is UDP-N-acetylglucosamine--N-acetylmuramyl-(pentapeptide) pyrophosphoryl-undecaprenol N-acetylglucosamine transferase from Vibrio campbellii (strain ATCC BAA-1116).